A 178-amino-acid chain; its full sequence is MLEKLIERVLFATRWLLAPLCIAMSLVLVVLGYVFMKELWHMLSHLDTISETDLVLSALGLVDLLFMAGLVLMVLLASYESFVSKLDKVDASEITWLKHTDFNALKLKVSLSIVAISAIFLLKRYMSLEDVLSSIPKDTPLSHNPIFWQVVIHLVFVCSALLAAVTNNIAFSQNNKGH.

The next 4 helical transmembrane spans lie at 15-35, 54-74, 102-122, and 145-165; these read WLLA…GYVF, LVLS…VLMV, FNAL…IFLL, and PIFW…LAAV.

This sequence belongs to the UPF0114 family.

Its subcellular location is the cell membrane. This Helicobacter pylori (strain Shi470) protein is UPF0114 protein HPSH_00970.